A 290-amino-acid chain; its full sequence is Large ribosomal subunit protein uL3 (290 aa).

An N5-methylglutamine modification is found at Gln-152. Positions 250 to 290 (ARLAEEQAAAEAESLAQAEAEIAAEGSDAAPEGDADKKDGE) are disordered. A compositionally biased stretch (low complexity) spans 255–274 (EQAAAEAESLAQAEAEIAAE).

Belongs to the universal ribosomal protein uL3 family. As to quaternary structure, part of the 50S ribosomal subunit. Forms a cluster with proteins L14 and L19. Post-translationally, methylated by PrmB.

One of the primary rRNA binding proteins, it binds directly near the 3'-end of the 23S rRNA, where it nucleates assembly of the 50S subunit. The polypeptide is Large ribosomal subunit protein uL3 (Jannaschia sp. (strain CCS1)).